Here is a 127-residue protein sequence, read N- to C-terminus: Small ribosomal subunit protein uS11 (127 aa).

The protein belongs to the universal ribosomal protein uS11 family. In terms of assembly, part of the 30S ribosomal subunit. Interacts with proteins S7 and S18. Binds to IF-3.

Its function is as follows. Located on the platform of the 30S subunit, it bridges several disparate RNA helices of the 16S rRNA. Forms part of the Shine-Dalgarno cleft in the 70S ribosome. The sequence is that of Small ribosomal subunit protein uS11 from Chlorobium limicola (strain DSM 245 / NBRC 103803 / 6330).